We begin with the raw amino-acid sequence, 1014 residues long: Probable LRR receptor-like serine/threonine-protein kinase At1g07650 (1014 aa).

The signal sequence occupies residues 1 to 23; the sequence is MIYLHRIYFIIVLFTLIFHGRLG. Topologically, residues 24–619 are extracellular; the sequence is FSDNNKLHEA…KPPVYYDTKD (596 aa). 3 N-linked (GlcNAc...) asparagine glycosylation sites follow: N76, N87, and N101. LRR repeat units follow at residues 89 to 112, 113 to 137, 139 to 160, 161 to 184, 186 to 207, 208 to 234, 256 to 279, 280 to 304, 305 to 327, 329 to 352, and 354 to 376; these read SCHV…EFSK, LRHL…WASM, LEDL…LTRL, TMLR…IGQL, HLEK…KLGL, LKNL…NWTR, LTSL…PLKN, LESI…IGDL, KKLK…SFEN, KKAD…FVER, and KNVD…DCNR. Residue N165 is glycosylated (N-linked (GlcNAc...) asparagine). Residues N210, N220, and N231 are each glycosylated (N-linked (GlcNAc...) asparagine). N-linked (GlcNAc...) asparagine glycans are attached at residues N362, N389, N474, N481, and N511. The LRR 12 repeat unit spans residues 516–539; sequence LHFAEIIFTDDNTLYSLGKRLFDI. N570 carries an N-linked (GlcNAc...) asparagine glycan. A helical transmembrane segment spans residues 620-640; the sequence is IILKVGVPVAAATLLLFIIVG. Over 641 to 1014 the chain is Cytoplasmic; it reads VFWKKRRDKN…DAEEKTGLLD (374 aa). The residue at position 667 (T667) is a Phosphothreonine. Residues 678-960 form the Protein kinase domain; sequence FDVTRKIGEG…EGKTAMQELL (283 aa). ATP-binding positions include 684–692 and K706; that span reads IGEGGFGSV. Phosphotyrosine is present on Y751. D805 serves as the catalytic Proton acceptor. Phosphoserine is present on residues S809 and S838. Phosphothreonine occurs at positions 839 and 844. Y852 carries the post-translational modification Phosphotyrosine. S989 bears the Phosphoserine mark. Residues 989–1002 show a composition bias toward polar residues; the sequence is SFSTSGPRTASANS. Residues 989 to 1014 form a disordered region; it reads SFSTSGPRTASANSLVDAEEKTGLLD.

It belongs to the protein kinase superfamily. Ser/Thr protein kinase family.

The protein localises to the membrane. The catalysed reaction is L-seryl-[protein] + ATP = O-phospho-L-seryl-[protein] + ADP + H(+). The enzyme catalyses L-threonyl-[protein] + ATP = O-phospho-L-threonyl-[protein] + ADP + H(+). The protein is Probable LRR receptor-like serine/threonine-protein kinase At1g07650 of Arabidopsis thaliana (Mouse-ear cress).